The primary structure comprises 391 residues: MILDFSWLPPEINSARIYAGAGSGPLFMAAAAWEGLAADLRASASSFDAVIAGLAAGPWSGPASVAMAGAAAPYVGWLSAAAGQAELSAGQATAAATAFEAALAATVHPAAVTANRVLLGALVATNILGQNTPAIAATEFDYVEMWAQDVGAMVGYHAGAAAVAETLTPFSVPPLDLAGLASQAGAQLTGMATSVSAALSPIAEGAVEGVPAVVAAAQSVAAGLPVDAALQVGQAAAYPASMLIGPMMQLAQMGTTANTAGLAGAEAAGLAAADVPTFAGDIASGTGLGGAGGLGAGMSAELGKARLVGAMSVPPTWEGSVPARMASSAMAGLGAMPAEVPAAGGPMGMMPMPMGMGGAGAGMPAGMMGRGGANPHVVQARPSVVPRVGIG.

The protein belongs to the mycobacterial PPE family.

This is an uncharacterized protein from Mycobacterium tuberculosis (strain CDC 1551 / Oshkosh).